Reading from the N-terminus, the 350-residue chain is tRNA uridine(34) hydroxylase (350 aa).

Residues 146–240 (DDPDALFIDM…YARKAREQGL (95 aa)) enclose the Rhodanese domain. The Cysteine persulfide intermediate role is filled by C200.

It belongs to the TrhO family.

It catalyses the reaction uridine(34) in tRNA + AH2 + O2 = 5-hydroxyuridine(34) in tRNA + A + H2O. Its function is as follows. Catalyzes oxygen-dependent 5-hydroxyuridine (ho5U) modification at position 34 in tRNAs, the first step in 5-carboxymethoxyuridine (cmo5U) biosynthesis. May be part of an alternate pathway, which is able to bypass cmo5U biogenesis in a subset of tRNAs under aerobic conditions. The protein is tRNA uridine(34) hydroxylase of Escherichia coli (strain K12).